We begin with the raw amino-acid sequence, 127 residues long: Small ribosomal subunit protein uS13 (127 aa).

Residues 99 to 127 (RGQRTRTNARTRRGRRGQAIGIKKKTLKK) form a disordered region.

The protein belongs to the universal ribosomal protein uS13 family. As to quaternary structure, part of the 30S ribosomal subunit. Forms a loose heterodimer with protein S19. Forms two bridges to the 50S subunit in the 70S ribosome.

In terms of biological role, located at the top of the head of the 30S subunit, it contacts several helices of the 16S rRNA. In the 70S ribosome it contacts the 23S rRNA (bridge B1a) and protein L5 of the 50S subunit (bridge B1b), connecting the 2 subunits; these bridges are implicated in subunit movement. Contacts the tRNAs in the A and P-sites. This Roseiflexus castenholzii (strain DSM 13941 / HLO8) protein is Small ribosomal subunit protein uS13.